The following is a 396-amino-acid chain: Ribose-phosphate pyrophosphokinase 1, chloroplastic (396 aa).

The N-terminal 36 residues, 1–36 (MPLSYSAAAAAAPSPLAARSRGLLRRPPRSSPVVVR), are a transit peptide targeting the chloroplast. Residues Asp-204, His-206, Asp-215, and Asp-219 each coordinate Mg(2+). The binding of phosphoribosylpyrophosphate stretch occupies residues 290 to 305 (GKVAVMMDDMIDTAGT).

Belongs to the ribose-phosphate pyrophosphokinase family. Mg(2+) serves as cofactor.

It localises to the plastid. The protein resides in the chloroplast. The catalysed reaction is D-ribose 5-phosphate + ATP = 5-phospho-alpha-D-ribose 1-diphosphate + AMP + H(+). This Oryza sativa subsp. japonica (Rice) protein is Ribose-phosphate pyrophosphokinase 1, chloroplastic.